Reading from the N-terminus, the 267-residue chain is Acyl-[acyl-carrier-protein]--UDP-N-acetylglucosamine O-acyltransferase (267 aa).

This sequence belongs to the transferase hexapeptide repeat family. LpxA subfamily. Homotrimer.

The protein localises to the cytoplasm. It carries out the reaction a (3R)-hydroxyacyl-[ACP] + UDP-N-acetyl-alpha-D-glucosamine = a UDP-3-O-[(3R)-3-hydroxyacyl]-N-acetyl-alpha-D-glucosamine + holo-[ACP]. It participates in glycolipid biosynthesis; lipid IV(A) biosynthesis; lipid IV(A) from (3R)-3-hydroxytetradecanoyl-[acyl-carrier-protein] and UDP-N-acetyl-alpha-D-glucosamine: step 1/6. In terms of biological role, involved in the biosynthesis of lipid A, a phosphorylated glycolipid that anchors the lipopolysaccharide to the outer membrane of the cell. The chain is Acyl-[acyl-carrier-protein]--UDP-N-acetylglucosamine O-acyltransferase from Cupriavidus pinatubonensis (strain JMP 134 / LMG 1197) (Cupriavidus necator (strain JMP 134)).